We begin with the raw amino-acid sequence, 95 residues long: Hiracin-JM79 immunity factor (95 aa).

Its function is as follows. Imparts immunity to bacteriocin hiracin-JM79 to naturally sensitive host strains. The polypeptide is Hiracin-JM79 immunity factor (Enterococcus hirae).